An 861-amino-acid polypeptide reads, in one-letter code: DNA mismatch repair protein MutS (861 aa).

ATP is bound at residue 613-620 (GPNMGGKS).

This sequence belongs to the DNA mismatch repair MutS family.

In terms of biological role, this protein is involved in the repair of mismatches in DNA. It is possible that it carries out the mismatch recognition step. This protein has a weak ATPase activity. The protein is DNA mismatch repair protein MutS of Dichelobacter nodosus (strain VCS1703A).